The following is a 1053-amino-acid chain: DIS3-like exonuclease 1 (1053 aa).

One can recognise a CSD1 domain in the interval 236-310 (AGIKSGRYIQ…KSEWKGRTAA (75 aa)). The tract at residues 306 to 332 (GRTAALGENDSDDKASGESPSEPMPTG) is disordered. Residues 365–431 (ILVTPWDYRI…GEIATILVEN (67 aa)) enclose the CSD2 domain. Residues 465-816 (RKDLRTTHLV…VHRLLMAAIS (352 aa)) enclose the RNB domain. The residue at position 989 (serine 989) is a Phosphoserine.

It belongs to the RNR ribonuclease family. Component of the RNA exosome complex. The catalytically inactive RNA exosome core (Exo-9) complex is believed to associate with catalytic subunits EXOSC10, and DIS3 or DIS3L in cytoplasmic- and nuclear-specific RNA exosome complex forms. Mg(2+) is required as a cofactor.

It localises to the cytoplasm. It carries out the reaction Exonucleolytic cleavage in the 3'- to 5'-direction to yield nucleoside 5'-phosphates.. Its function is as follows. Catalytic component of the RNA exosome complex which has 3'-&gt;5' exoribonuclease activity and participates in a multitude of cellular RNA processing and degradation events. In the cytoplasm, the RNA exosome complex is involved in general mRNA turnover and specifically degrades inherently unstable mRNAs containing AU-rich elements (AREs) within their 3' untranslated regions, and in RNA surveillance pathways, preventing translation of aberrant mRNAs. It seems to be involved in degradation of histone mRNA. In Mus musculus (Mouse), this protein is DIS3-like exonuclease 1 (Dis3l).